Reading from the N-terminus, the 149-residue chain is MTEWEHVNKVWAVVEPDIPAVGLAILLRLFKEHKETKDLFPKFKEIPVQQLGNNEDLRKHGVTVLRALGNILKQKGKHSTNVKELADTHINKHKIPPKNFVLITNIAVKVLTEMYPSDMTGPMQESFSKVFTVICSDLETLYKEANFQG.

The residue at position 2 (Thr-2) is an N-acetylthreonine. The region spanning 2 to 143 (TEWEHVNKVW…ICSDLETLYK (142 aa)) is the Globin domain. His-60 is a binding site for nitrite. His-60 contacts O2. His-89 contacts heme b.

It belongs to the globin family. Monomeric.

It localises to the cytoplasm. The protein localises to the sarcoplasm. It carries out the reaction Fe(III)-heme b-[protein] + nitric oxide + H2O = Fe(II)-heme b-[protein] + nitrite + 2 H(+). The catalysed reaction is H2O2 + AH2 = A + 2 H2O. Functionally, monomeric heme protein which primary function is to store oxygen and facilitate its diffusion within muscle tissues. Reversibly binds oxygen through a pentacoordinated heme iron and enables its timely and efficient release as needed during periods of heightened demand. Depending on the oxidative conditions of tissues and cells, and in addition to its ability to bind oxygen, it also has a nitrite reductase activity whereby it regulates the production of bioactive nitric oxide. Under stress conditions, like hypoxia and anoxia, it also protects cells against reactive oxygen species thanks to its pseudoperoxidase activity. The chain is Myoglobin (mb) from Heterodontus portusjacksoni (Port Jackson shark).